The primary structure comprises 658 residues: MFKNEYQGGAFVEIFSAQGKNPGAKWKILGSPSVIWKEFDKEVKSFVFVLEGSSQTNRIQLPKENKQILGLIQRFLVLQIYVPLGQDFSTELLITDLGNIKRRLYLSTVHKEVSSTPLHAKIPLFMIKRKIWCNLCIDLVAFTSEIFKGAVFQSLDGIIVSANCKLRKIFTLKFKPRETADRDDEPADIIPRSCQLATDVPHVTQLLNMTKLRQTEIKFGGHPLRSAESDQFISSRAGSVRSSKSQDVCHIAFGSRVLGPPPPSGRRNNLRLSAETVRSIGYKNNQSCQQPAEEKHVNSADTSALLIPLSEQQGEKGSSHPVKQTTPLPASLPTPYPHPPRDPSADKGSSRRGLGLRSSSGSRTEARCGSSSGNSRSEEDVAMAANNLTQLTTEPVRASTPEPPAAEPPDEWIFPESSGPPSGAAGSSSSLLLDGDSRTASHLWLETSKDSDPDQAEGTQMAPKDIFTFSSRPRSAPHGKSHDLSPTGCPCILDPKEDSRVTKGDTELEDDFYGSDSSEEEYNWRNYQPSQMSESELQMLASLRRQQNEDLEDTGAPHGLSASQVDNCNVSISTSSDDTTTWNSCLPPPVNQGRHYQKEMNPPSPSNPRDWLNMLSPPIVPPSQQPLEQSLDSSASLSVQGGALLLTQPHLASCAVGC.

2 disordered regions span residues 312 to 522 (QQGE…EEEY) and 589 to 634 (PVNQ…LDSS). Positions 319-328 (SHPVKQTTPL) are enriched in polar residues. The span at 339-349 (PPRDPSADKGS) shows a compositional bias: basic and acidic residues. 2 stretches are compositionally biased toward low complexity: residues 351-363 (RRGL…SGSR) and 417-434 (SSGP…LLLD). Positions 494-506 (DPKEDSRVTKGDT) are enriched in basic and acidic residues. The span at 507–521 (ELEDDFYGSDSSEEE) shows a compositional bias: acidic residues. Polar residues predominate over residues 625 to 634 (QPLEQSLDSS).

This chain is Protein CFAP20DC, found in Rattus norvegicus (Rat).